Here is a 242-residue protein sequence, read N- to C-terminus: UPF0309 protein BSUIS_B0903 (242 aa).

One can recognise an SIS domain in the interval 30 to 214 (AADLIAAAAR…ARLVGEGDAP (185 aa)).

The protein belongs to the UPF0309 family.

The protein is UPF0309 protein BSUIS_B0903 of Brucella suis (strain ATCC 23445 / NCTC 10510).